We begin with the raw amino-acid sequence, 86 residues long: MPKSEIHPKWYPDAKVICNGEVVMTTGSTQPELHVDVWSGNHPFFTGTQKILDTEGRVDRFMKKYGMGSANSATSKEQKEEKDSKK.

The segment at 65–86 is disordered; the sequence is YGMGSANSATSKEQKEEKDSKK. Positions 76–86 are enriched in basic and acidic residues; the sequence is KEQKEEKDSKK.

Belongs to the bacterial ribosomal protein bL31 family. Type A subfamily. Part of the 50S ribosomal subunit.

Binds the 23S rRNA. This is Large ribosomal subunit protein bL31 from Prochlorococcus marinus (strain AS9601).